The chain runs to 267 residues: Small ribosomal subunit protein eS4 (267 aa).

In terms of domain architecture, S4 RNA-binding spans 42-104 (LPLILVLRNR…TKENFRLLFD (63 aa)).

This sequence belongs to the eukaryotic ribosomal protein eS4 family.

The protein resides in the cytoplasm. The sequence is that of Small ribosomal subunit protein eS4 (rps4) from Dictyostelium discoideum (Social amoeba).